We begin with the raw amino-acid sequence, 140 residues long: RxLR effector protein CRE9 (140 aa).

The first 24 residues, 1–24, serve as a signal peptide directing secretion; sequence MRTSVFVALVVATFVATCISFTSA. A RxLR-dEER motif is present at residues 43-61; that stretch reads RTLAEADDWWLASTNTEER. Residues 119 to 139 form a helical membrane-spanning segment; the sequence is LKILYGALLAGLIIVGVEAML.

Belongs to the RxLR effector family.

It is found in the secreted. Its subcellular location is the host cell. It localises to the membrane. In terms of biological role, effector that is involved in host plant infection. Contributes to virulence during the early infection stage, by inhibiting plant defense responses induced by both PAMP-triggered immunity (PTI) and effector-triggered immunity (ETI). This is RxLR effector protein CRE9 from Phytophthora infestans (strain T30-4) (Potato late blight agent).